The chain runs to 133 residues: Small ribosomal subunit protein bS6 (133 aa).

The protein belongs to the bacterial ribosomal protein bS6 family.

Binds together with bS18 to 16S ribosomal RNA. The chain is Small ribosomal subunit protein bS6 from Chlorobium phaeovibrioides (strain DSM 265 / 1930) (Prosthecochloris vibrioformis (strain DSM 265)).